Reading from the N-terminus, the 430-residue chain is GPI mannosyltransferase 1 (430 aa).

Residues Met1–Ser11 are Cytoplasmic-facing. Residues Leu12–Phe32 form a helical membrane-spanning segment. Topologically, residues His33–Pro72 are lumenal. The helical transmembrane segment at Leu73–Phe93 threads the bilayer. Over Ala94–Arg115 the chain is Cytoplasmic. A helical transmembrane segment spans residues Ser116 to Thr136. The Lumenal segment spans residues Arg137–Ala163. Residues Ala164 to Leu184 form a helical membrane-spanning segment. At Thr185–Thr206 the chain is on the cytoplasmic side. The chain crosses the membrane as a helical span at residues Ala207–Leu227. The Lumenal portion of the chain corresponds to Cys228–Ala360. A helical membrane pass occupies residues Leu361–Leu381. Residues Glu382–Asp388 lie on the Cytoplasmic side of the membrane. The chain crosses the membrane as a helical span at residues Phe389–Met409. Topologically, residues Leu410 to Ala430 are lumenal.

This sequence belongs to the PIGM family.

It is found in the endoplasmic reticulum membrane. It functions in the pathway glycolipid biosynthesis; glycosylphosphatidylinositol-anchor biosynthesis. Its function is as follows. Mannosyltransferase involved in glycosylphosphatidylinositol-anchor biosynthesis. Transfers the first alpha-1,4-mannose to GlcN-PI during GPI precursor assembly. This is GPI mannosyltransferase 1 (PIGM) from Trypanosoma brucei brucei (strain 927/4 GUTat10.1).